A 327-amino-acid chain; its full sequence is tRNA(Ile)-lysidine synthase (327 aa).

32 to 37 (SGGQDS) contacts ATP.

Belongs to the tRNA(Ile)-lysidine synthase family.

Its subcellular location is the cytoplasm. It catalyses the reaction cytidine(34) in tRNA(Ile2) + L-lysine + ATP = lysidine(34) in tRNA(Ile2) + AMP + diphosphate + H(+). Ligates lysine onto the cytidine present at position 34 of the AUA codon-specific tRNA(Ile) that contains the anticodon CAU, in an ATP-dependent manner. Cytidine is converted to lysidine, thus changing the amino acid specificity of the tRNA from methionine to isoleucine. The protein is tRNA(Ile)-lysidine synthase of Synechococcus sp. (strain JA-2-3B'a(2-13)) (Cyanobacteria bacterium Yellowstone B-Prime).